A 498-amino-acid polypeptide reads, in one-letter code: ATP synthase subunit beta, chloroplastic (498 aa).

172–179 (GGAGVGKT) contacts ATP.

This sequence belongs to the ATPase alpha/beta chains family. As to quaternary structure, F-type ATPases have 2 components, CF(1) - the catalytic core - and CF(0) - the membrane proton channel. CF(1) has five subunits: alpha(3), beta(3), gamma(1), delta(1), epsilon(1). CF(0) has four main subunits: a(1), b(1), b'(1) and c(9-12).

Its subcellular location is the plastid. It is found in the chloroplast thylakoid membrane. It catalyses the reaction ATP + H2O + 4 H(+)(in) = ADP + phosphate + 5 H(+)(out). Functionally, produces ATP from ADP in the presence of a proton gradient across the membrane. The catalytic sites are hosted primarily by the beta subunits. This is ATP synthase subunit beta, chloroplastic from Agrostis stolonifera (Creeping bentgrass).